Consider the following 58-residue polypeptide: Small ribosomal subunit protein eS30 (58 aa).

Residues 1 to 58 (MGKVHGSLARAGKVKNQTPKVPKLDKKKRLTGRAKKRQLYNRRFSDNGGRKKGPNSKA) are disordered. Basic residues predominate over residues 25–40 (DKKKRLTGRAKKRQLY).

The protein belongs to the eukaryotic ribosomal protein eS30 family. Component of the small ribosomal subunit. Mature ribosomes consist of a small (40S) and a large (60S) subunit. The 40S subunit contains about 32 different proteins and 1 molecule of RNA (18S). The 60S subunit contains about 42 different proteins and 3 molecules of RNA (28S, 5.8S and 5S).

Its subcellular location is the cytoplasm. Its function is as follows. Component of the ribosome, a large ribonucleoprotein complex responsible for the synthesis of proteins in the cell. The small ribosomal subunit (SSU) binds messenger RNAs (mRNAs) and translates the encoded message by selecting cognate aminoacyl-transfer RNA (tRNA) molecules. The large subunit (LSU) contains the ribosomal catalytic site termed the peptidyl transferase center (PTC), which catalyzes the formation of peptide bonds, thereby polymerizing the amino acids delivered by tRNAs into a polypeptide chain. The nascent polypeptides leave the ribosome through a tunnel in the LSU and interact with protein factors that function in enzymatic processing, targeting, and the membrane insertion of nascent chains at the exit of the ribosomal tunnel. In Plasmodium falciparum (isolate 3D7), this protein is Small ribosomal subunit protein eS30.